The primary structure comprises 396 residues: 1-deoxy-D-xylulose 5-phosphate reductoisomerase (396 aa).

Positions 13, 14, 15, 16, and 127 each coordinate NADPH. Lys-128 serves as a coordination point for 1-deoxy-D-xylulose 5-phosphate. Glu-129 lines the NADPH pocket. Asp-153 is a Mn(2+) binding site. The 1-deoxy-D-xylulose 5-phosphate site is built by Ser-154, Glu-155, Ser-184, and His-207. Residue Glu-155 coordinates Mn(2+). Gly-213 contacts NADPH. 4 residues coordinate 1-deoxy-D-xylulose 5-phosphate: Ser-220, Asn-225, Lys-226, and Glu-229. Glu-229 contacts Mn(2+).

The protein belongs to the DXR family. Requires Mg(2+) as cofactor. Mn(2+) is required as a cofactor.

It catalyses the reaction 2-C-methyl-D-erythritol 4-phosphate + NADP(+) = 1-deoxy-D-xylulose 5-phosphate + NADPH + H(+). It functions in the pathway isoprenoid biosynthesis; isopentenyl diphosphate biosynthesis via DXP pathway; isopentenyl diphosphate from 1-deoxy-D-xylulose 5-phosphate: step 1/6. In terms of biological role, catalyzes the NADPH-dependent rearrangement and reduction of 1-deoxy-D-xylulose-5-phosphate (DXP) to 2-C-methyl-D-erythritol 4-phosphate (MEP). The sequence is that of 1-deoxy-D-xylulose 5-phosphate reductoisomerase from Pseudomonas aeruginosa (strain UCBPP-PA14).